The chain runs to 294 residues: Protoheme IX farnesyltransferase (294 aa).

Transmembrane regions (helical) follow at residues 24–44 (VVLL…PGWV), 48–68 (LIAF…AINH), 96–116 (ALWF…LFVN), 118–138 (LTAL…TGYL), 145–165 (NIVI…TAVT), 172–192 (ALLL…ALAI), 211–231 (GIQF…VVSL), 241–263 (WIYL…KLYF), and 268–288 (VVAM…FVFL).

It belongs to the UbiA prenyltransferase family. Protoheme IX farnesyltransferase subfamily.

Its subcellular location is the cell inner membrane. It catalyses the reaction heme b + (2E,6E)-farnesyl diphosphate + H2O = Fe(II)-heme o + diphosphate. The protein operates within porphyrin-containing compound metabolism; heme O biosynthesis; heme O from protoheme: step 1/1. Its function is as follows. Converts heme B (protoheme IX) to heme O by substitution of the vinyl group on carbon 2 of heme B porphyrin ring with a hydroxyethyl farnesyl side group. The protein is Protoheme IX farnesyltransferase of Legionella pneumophila (strain Lens).